The sequence spans 183 residues: Dual-action ribosomal maturation protein DarP (183 aa).

This sequence belongs to the DarP family.

The protein resides in the cytoplasm. Member of a network of 50S ribosomal subunit biogenesis factors which assembles along the 30S-50S interface, preventing incorrect 23S rRNA structures from forming. Promotes peptidyl transferase center (PTC) maturation. The chain is Dual-action ribosomal maturation protein DarP from Salmonella paratyphi A (strain ATCC 9150 / SARB42).